Here is a 515-residue protein sequence, read N- to C-terminus: ATP synthase subunit alpha (515 aa).

ATP is bound at residue 169–176 (GDRQTGKT).

The protein belongs to the ATPase alpha/beta chains family. In terms of assembly, F-type ATPases have 2 components, CF(1) - the catalytic core - and CF(0) - the membrane proton channel. CF(1) has five subunits: alpha(3), beta(3), gamma(1), delta(1), epsilon(1). CF(0) has three main subunits: a(1), b(2) and c(9-12). The alpha and beta chains form an alternating ring which encloses part of the gamma chain. CF(1) is attached to CF(0) by a central stalk formed by the gamma and epsilon chains, while a peripheral stalk is formed by the delta and b chains.

Its subcellular location is the cell inner membrane. It catalyses the reaction ATP + H2O + 4 H(+)(in) = ADP + phosphate + 5 H(+)(out). In terms of biological role, produces ATP from ADP in the presence of a proton gradient across the membrane. The alpha chain is a regulatory subunit. This Neisseria meningitidis serogroup A / serotype 4A (strain DSM 15465 / Z2491) protein is ATP synthase subunit alpha.